A 373-amino-acid polypeptide reads, in one-letter code: Transmembrane protein adipocyte-associated 1 (373 aa).

2 N-linked (GlcNAc...) asparagine glycosylation sites follow: N11 and N23. 7 helical membrane passes run L48–A68, S76–A96, F123–E143, V151–I171, Q192–P212, I234–I254, and F265–G285. An N-linked (GlcNAc...) asparagine glycan is attached at N361.

Belongs to the UPF0359 family. Ubiquitous, with higher levels in heart, placenta and kidney.

It localises to the membrane. In Homo sapiens (Human), this protein is Transmembrane protein adipocyte-associated 1 (TPRA1).